We begin with the raw amino-acid sequence, 1356 residues long: Vascular endothelial growth factor receptor 2 (1356 aa).

A signal peptide spans 1–19 (MQSKVLLAVALWLCVETRA). Residues 20-764 (ASVGLPSVSL…EGAQEKTNLE (745 aa)) lie on the Extracellular side of the membrane. N-linked (GlcNAc...) asparagine glycosylation is found at Asn46, Asn66, Asn96, Asn143, Asn158, and Asn245. 7 consecutive Ig-like C2-type domains span residues 46–110 (NTTL…ETDL), 141–207 (NKNK…INDE), 224–320 (YDVV…KNST), 328–414 (PFVA…HVVS), 421–548 (PQIG…FHVT), 551–660 (PEIT…RQLT), and 667–753 (PTIT…AFFI). Cys53 and Cys103 are joined by a disulfide. The cysteines at positions 150 and 200 are disulfide-linked. The cysteines at positions 246 and 307 are disulfide-linked. Residues Asn318, Asn374, Asn395, Asn511, Asn523, Asn580, Asn613, Asn619, Asn631, Asn675, Asn704, and Asn721 are each glycosylated (N-linked (GlcNAc...) asparagine). 2 disulfides stabilise this stretch: Cys445/Cys530 and Cys571/Cys642. Cysteines 688 and 737 form a disulfide. A helical transmembrane segment spans residues 765 to 785 (IIILVGTAVIAMFFWLLLVII). The Cytoplasmic portion of the chain corresponds to 786–1356 (LRTVKRANGG…SGTTLSSPPV (571 aa)). At Tyr801 the chain carries Phosphotyrosine. One can recognise a Protein kinase domain in the interval 834–1162 (LKLGKPLGRG…FSELVEHLGN (329 aa)). ATP contacts are provided by residues 840–848 (LGRGAFGQV) and Lys868. At Tyr951 the chain carries Phosphotyrosine; by autocatalysis. Phosphoserine is present on residues Ser982 and Ser984. A Phosphotyrosine; by autocatalysis modification is found at Tyr996. Cys1024 and Cys1045 are disulfide-bonded. Asp1028 (proton acceptor) is an active-site residue. 4 positions are modified to phosphotyrosine; by autocatalysis: Tyr1054, Tyr1059, Tyr1175, and Tyr1214. Phosphoserine occurs at positions 1231 and 1235. The residue at position 1238 (Thr1238) is a Phosphothreonine. The disordered stretch occupies residues 1274–1318 (DRTKLSPSFGGMVPSKSRESVASEGSNQTSGYQSGYHSDDTDTTV). The segment covering 1296–1309 (SEGSNQTSGYQSGY) has biased composition (polar residues). Phosphotyrosine; by autocatalysis occurs at positions 1305, 1309, and 1319.

This sequence belongs to the protein kinase superfamily. Tyr protein kinase family. CSF-1/PDGF receptor subfamily. In terms of assembly, homodimer in the presence of bound dimeric VEGFA, VEGFC or VEGFD ligands; monomeric in the absence of bound ligands. Can also form heterodimers with FLT1/VEGFR1 and KDR/VEGFR2. Interacts (tyrosine phosphorylated) with LFYN, NCK1, PLCG1. Interacts (tyrosine-phosphorylated active form preferentially) with DAB2IP (via C2 domain and active form preferentially); the interaction occurs at the late phase of VEGFA response and inhibits KDR/VEGFR2 activity. Interacts with SHBSH2D2A/TSAD, GRB2, MYOF, CBL and PDCD6. Interacts (via C-terminus domain) with ERN1 (via kinase domain); the interaction is facilitated in a XBP1 isoform 1- and vascular endothelial growth factor (VEGF)-dependent manner in endothelial cells. Interacts (via juxtamembrane region) with chaperone PDCL3 (via thioredoxin fold region); the interaction leads to increased KDR/VEGFR2 abundance through inhibition of its ubiquitination and degradation. Interacts (tyrosine phosphorylated) with CCDC88A/GIV (via SH2-like region); binding requires autophosphorylation of the KDR/VEGFR2 C-terminal region. Interacts with isoform 2 of BSG. Interacts with SLC31A1; this interaction is induced upon VEGFA stimulation leading to SLC31A1 and KDR subsequent co-internalization to early endosomes, thereby activating KDR downstream signaling in endothelial cells. (Microbial infection) Interacts with HIV-1 Tat. In terms of processing, N-glycosylated. Ubiquitinated. Tyrosine phosphorylation of the receptor promotes its poly-ubiquitination, leading to its degradation via the proteasome or lysosomal proteases. Post-translationally, autophosphorylated on tyrosine residues upon ligand binding. Autophosphorylation occurs in trans, i.e. one subunit of the dimeric receptor phosphorylates tyrosine residues on the other subunit. Phosphorylation at Tyr-951 is important for interaction with SH2D2A/TSAD and VEGFA-mediated reorganization of the actin cytoskeleton. Phosphorylation at Tyr-1175 is important for interaction with PLCG1 and SHB. Phosphorylation at Tyr-1214 is important for interaction with NCK1 and FYN. Dephosphorylated by PTPRB. Dephosphorylated by PTPRJ at Tyr-951, Tyr-996, Tyr-1054, Tyr-1059, Tyr-1175 and Tyr-1214. In terms of processing, the inhibitory disulfide bond between Cys-1024 and Cys-1045 may serve as a specific molecular switch for H(2)S-induced modification that regulates KDR/VEGFR2 function. In terms of tissue distribution, detected in cornea (at protein level). Widely expressed.

Its subcellular location is the cell junction. The protein resides in the endoplasmic reticulum. It is found in the cell membrane. The protein localises to the cytoplasm. It localises to the nucleus. Its subcellular location is the cytoplasmic vesicle. The protein resides in the early endosome. It is found in the secreted. The enzyme catalyses L-tyrosyl-[protein] + ATP = O-phospho-L-tyrosyl-[protein] + ADP + H(+). Its activity is regulated as follows. Present in an inactive conformation in the absence of bound ligand. Binding of VEGFA, VEGFC or VEGFD leads to dimerization and activation by autophosphorylation on tyrosine residues. Inhibited by the small molecule PTK inhibitor SU5614 ((3Z)-5-Chloro-3-[(3,5-dimethyl-1H-pyrrol-2-yl)methylene]-1,3-dihydro-2H-indol-2-one). May be regulated by hydrogen sulfide (H(2)S) levels via a H(2)S-sensitive intracellular disulfide bond. Functionally, tyrosine-protein kinase that acts as a cell-surface receptor for VEGFA, VEGFC and VEGFD. Plays an essential role in the regulation of angiogenesis, vascular development, vascular permeability, and embryonic hematopoiesis. Promotes proliferation, survival, migration and differentiation of endothelial cells. Promotes reorganization of the actin cytoskeleton. Isoforms lacking a transmembrane domain, such as isoform 2 and isoform 3, may function as decoy receptors for VEGFA, VEGFC and/or VEGFD. Isoform 2 plays an important role as negative regulator of VEGFA- and VEGFC-mediated lymphangiogenesis by limiting the amount of free VEGFA and/or VEGFC and preventing their binding to FLT4. Modulates FLT1 and FLT4 signaling by forming heterodimers. Binding of vascular growth factors to isoform 1 leads to the activation of several signaling cascades. Activation of PLCG1 leads to the production of the cellular signaling molecules diacylglycerol and inositol 1,4,5-trisphosphate and the activation of protein kinase C. Mediates activation of MAPK1/ERK2, MAPK3/ERK1 and the MAP kinase signaling pathway, as well as of the AKT1 signaling pathway. Mediates phosphorylation of PIK3R1, the regulatory subunit of phosphatidylinositol 3-kinase, reorganization of the actin cytoskeleton and activation of PTK2/FAK1. Required for VEGFA-mediated induction of NOS2 and NOS3, leading to the production of the signaling molecule nitric oxide (NO) by endothelial cells. Phosphorylates PLCG1. Promotes phosphorylation of FYN, NCK1, NOS3, PIK3R1, PTK2/FAK1 and SRC. The chain is Vascular endothelial growth factor receptor 2 from Homo sapiens (Human).